A 37-amino-acid chain; its full sequence is Photosystem II reaction center protein L (37 aa).

Over 1–13 the chain is Cytoplasmic; that stretch reads MEPNPNRQPVELN. A helical membrane pass occupies residues 14 to 35; it reads RTSLYLGLLLILVLALLFSSYF. Residues 36 to 37 are Lumenal-facing; it reads FN.

In terms of assembly, PSII is composed of 1 copy each of membrane proteins PsbA, PsbB, PsbC, PsbD, PsbE, PsbF, PsbH, PsbI, PsbJ, PsbK, PsbL, PsbM, PsbT, PsbX, PsbY, PsbZ, Psb30/Ycf12, peripheral proteins PsbO, CyanoQ (PsbQ), PsbU, PsbV and a large number of cofactors. It forms dimeric complexes. Part of a photosystem II (PSII) assembly intermediate complex PSII-I; crystallized from a strain deleted of psbJ, it forms monomeric PSII before addition of the oxygen evolving complex. PSII-I includes 3 assembly factors not found in mature PSII (Psb27, Psb28 and Psb34). PSII binds multiple chlorophylls, carotenoids and specific lipids. serves as cofactor.

It is found in the cellular thylakoid membrane. One of the components of the core complex of photosystem II (PSII). PSII is a light-driven water:plastoquinone oxidoreductase that uses light energy to abstract electrons from H(2)O, generating O(2) and a proton gradient subsequently used for ATP formation. It consists of a core antenna complex that captures photons, and an electron transfer chain that converts photonic excitation into a charge separation. This subunit is found at the monomer-monomer interface and is required for correct PSII assembly and/or dimerization. This subunit may make specific contacts with lipid(s). This is Photosystem II reaction center protein L from Thermosynechococcus vestitus (strain NIES-2133 / IAM M-273 / BP-1).